Reading from the N-terminus, the 239-residue chain is Small ribosomal subunit protein uS3 (239 aa).

Positions 39-107 (IREFIKEECK…ELHLNIVEVR (69 aa)) constitute a KH type-2 domain. A compositionally biased stretch (basic and acidic residues) spans 212–221 (PQARDRKAQE). Positions 212 to 239 (PQARDRKAQELQDGPAPRGAGGNRRGDR) are disordered. A compositionally biased stretch (gly residues) spans 230-239 (GAGGNRRGDR).

Belongs to the universal ribosomal protein uS3 family. Part of the 30S ribosomal subunit. Forms a tight complex with proteins S10 and S14.

Its function is as follows. Binds the lower part of the 30S subunit head. Binds mRNA in the 70S ribosome, positioning it for translation. This chain is Small ribosomal subunit protein uS3, found in Ruegeria sp. (strain TM1040) (Silicibacter sp.).